A 216-amino-acid chain; its full sequence is Ribosomal RNA small subunit methyltransferase G (216 aa).

Residues glycine 86, leucine 91, 137–138, and arginine 155 each bind S-adenosyl-L-methionine; that span reads VE.

This sequence belongs to the methyltransferase superfamily. RNA methyltransferase RsmG family.

The protein localises to the cytoplasm. It carries out the reaction guanosine(527) in 16S rRNA + S-adenosyl-L-methionine = N(7)-methylguanosine(527) in 16S rRNA + S-adenosyl-L-homocysteine. Specifically methylates the N7 position of guanine in position 527 of 16S rRNA. The sequence is that of Ribosomal RNA small subunit methyltransferase G from Lawsonia intracellularis (strain PHE/MN1-00).